The chain runs to 301 residues: Small ribosomal subunit protein uS2 (301 aa).

Belongs to the universal ribosomal protein uS2 family.

This chain is Small ribosomal subunit protein uS2, found in Acidobacterium capsulatum (strain ATCC 51196 / DSM 11244 / BCRC 80197 / JCM 7670 / NBRC 15755 / NCIMB 13165 / 161).